Consider the following 339-residue polypeptide: Glycerol-3-phosphate dehydrogenase [NAD(P)+] (339 aa).

The NADPH site is built by Ser15, Tyr16, His36, and Lys110. Residues Lys110, Gly139, and Thr141 each contribute to the sn-glycerol 3-phosphate site. Ala143 lines the NADPH pocket. Sn-glycerol 3-phosphate is bound by residues Lys195, Asp248, Ser258, Arg259, and Asn260. Lys195 acts as the Proton acceptor in catalysis. An NADPH-binding site is contributed by Arg259. 2 residues coordinate NADPH: Val283 and Glu285.

The protein belongs to the NAD-dependent glycerol-3-phosphate dehydrogenase family.

It is found in the cytoplasm. It catalyses the reaction sn-glycerol 3-phosphate + NAD(+) = dihydroxyacetone phosphate + NADH + H(+). The catalysed reaction is sn-glycerol 3-phosphate + NADP(+) = dihydroxyacetone phosphate + NADPH + H(+). The protein operates within membrane lipid metabolism; glycerophospholipid metabolism. Its function is as follows. Catalyzes the reduction of the glycolytic intermediate dihydroxyacetone phosphate (DHAP) to sn-glycerol 3-phosphate (G3P), the key precursor for phospholipid synthesis. This Serratia proteamaculans (strain 568) protein is Glycerol-3-phosphate dehydrogenase [NAD(P)+].